Reading from the N-terminus, the 327-residue chain is Putative HTH-type transcriptional regulatory protein MM_0444 (327 aa).

Residues 132–190 (LKKARTTQSMSLGTLASMVGVSRRTISKYEEEGMDASIDVVLHLEDIFGVELAKPIDIL) enclose the HTH cro/C1-type domain. Positions 143-162 (LGTLASMVGVSRRTISKYEE) form a DNA-binding region, H-T-H motif. A disordered region spans residues 195–214 (SRKPRKKAEPEKEEPKGKPG). The span at 201 to 211 (KAEPEKEEPKG) shows a compositional bias: basic and acidic residues.

This is Putative HTH-type transcriptional regulatory protein MM_0444 from Methanosarcina mazei (strain ATCC BAA-159 / DSM 3647 / Goe1 / Go1 / JCM 11833 / OCM 88) (Methanosarcina frisia).